We begin with the raw amino-acid sequence, 98 residues long: Co-chaperonin GroES (98 aa).

Belongs to the GroES chaperonin family. Heptamer of 7 subunits arranged in a ring. Interacts with the chaperonin GroEL.

The protein localises to the cytoplasm. In terms of biological role, together with the chaperonin GroEL, plays an essential role in assisting protein folding. The GroEL-GroES system forms a nano-cage that allows encapsulation of the non-native substrate proteins and provides a physical environment optimized to promote and accelerate protein folding. GroES binds to the apical surface of the GroEL ring, thereby capping the opening of the GroEL channel. The chain is Co-chaperonin GroES from Kineococcus radiotolerans (strain ATCC BAA-149 / DSM 14245 / SRS30216).